The chain runs to 368 residues: Phospho-N-acetylmuramoyl-pentapeptide-transferase (368 aa).

The next 10 helical transmembrane spans lie at 32 to 52, 79 to 99, 102 to 122, 142 to 160, 176 to 196, 207 to 227, 244 to 264, 271 to 291, 296 to 316, and 345 to 365; these read TGGAVVTGALFVFLFGPWIID, TPTMGGLMILSGLVVSTVLWA, LNPYVWIVLAVTLGFGLIGFY, LLLELLIALAACYALTRLG, VALDLGWFFLGFGAFIIVGAG, GLAIVPVMIAAASFAMIAYLA, AGELAVLCGAVLGAGLGFLWF, IFMGDTGSLALGGMLGSIAVA, IVLAVIGGLFVLEAVSVIVQV, and QIVIRFWIISVMLALAGLSTL.

This sequence belongs to the glycosyltransferase 4 family. MraY subfamily. Mg(2+) is required as a cofactor.

It localises to the cell inner membrane. The enzyme catalyses UDP-N-acetyl-alpha-D-muramoyl-L-alanyl-gamma-D-glutamyl-meso-2,6-diaminopimeloyl-D-alanyl-D-alanine + di-trans,octa-cis-undecaprenyl phosphate = di-trans,octa-cis-undecaprenyl diphospho-N-acetyl-alpha-D-muramoyl-L-alanyl-D-glutamyl-meso-2,6-diaminopimeloyl-D-alanyl-D-alanine + UMP. It functions in the pathway cell wall biogenesis; peptidoglycan biosynthesis. Its function is as follows. Catalyzes the initial step of the lipid cycle reactions in the biosynthesis of the cell wall peptidoglycan: transfers peptidoglycan precursor phospho-MurNAc-pentapeptide from UDP-MurNAc-pentapeptide onto the lipid carrier undecaprenyl phosphate, yielding undecaprenyl-pyrophosphoryl-MurNAc-pentapeptide, known as lipid I. The protein is Phospho-N-acetylmuramoyl-pentapeptide-transferase of Nitrobacter winogradskyi (strain ATCC 25391 / DSM 10237 / CIP 104748 / NCIMB 11846 / Nb-255).